We begin with the raw amino-acid sequence, 60 residues long: UPF0434 protein ETA_21370 (60 aa).

This sequence belongs to the UPF0434 family.

The sequence is that of UPF0434 protein ETA_21370 from Erwinia tasmaniensis (strain DSM 17950 / CFBP 7177 / CIP 109463 / NCPPB 4357 / Et1/99).